Here is a 315-residue protein sequence, read N- to C-terminus: Methenyltetrahydromethanopterin cyclohydrolase (315 aa).

Belongs to the MCH family.

It is found in the cytoplasm. The enzyme catalyses 5,10-methenyl-5,6,7,8-tetrahydromethanopterin + H2O = N(5)-formyl-5,6,7,8-tetrahydromethanopterin + H(+). It participates in one-carbon metabolism; methanogenesis from CO(2); 5,10-methenyl-5,6,7,8-tetrahydromethanopterin from CO(2): step 3/3. In terms of biological role, catalyzes the reversible interconversion of 5-formyl-H(4)MPT to methenyl-H(4)MPT(+). This Methanoculleus marisnigri (strain ATCC 35101 / DSM 1498 / JR1) protein is Methenyltetrahydromethanopterin cyclohydrolase.